Here is an 85-residue protein sequence, read N- to C-terminus: Translation initiation factor IF-1 2 (85 aa).

Residues 1-72 (MAKEELIEMH…SKGRITFRHI (72 aa)) enclose the S1-like domain.

The protein belongs to the IF-1 family. In terms of assembly, component of the 30S ribosomal translation pre-initiation complex which assembles on the 30S ribosome in the order IF-2 and IF-3, IF-1 and N-formylmethionyl-tRNA(fMet); mRNA recruitment can occur at any time during PIC assembly.

Its subcellular location is the cytoplasm. In terms of biological role, one of the essential components for the initiation of protein synthesis. Stabilizes the binding of IF-2 and IF-3 on the 30S subunit to which N-formylmethionyl-tRNA(fMet) subsequently binds. Helps modulate mRNA selection, yielding the 30S pre-initiation complex (PIC). Upon addition of the 50S ribosomal subunit IF-1, IF-2 and IF-3 are released leaving the mature 70S translation initiation complex. The polypeptide is Translation initiation factor IF-1 2 (Polaromonas sp. (strain JS666 / ATCC BAA-500)).